Reading from the N-terminus, the 39-residue chain is Phospholipase A2 (39 aa).

Ca(2+)-binding residues include W10, G12, and G14. A disulfide bridge links C11 with C33. The active site involves H36. D37 lines the Ca(2+) pocket.

It depends on Ca(2+) as a cofactor. In terms of tissue distribution, expressed uniformly in tentacles (at protein level).

Its subcellular location is the secreted. It localises to the nematocyst. The catalysed reaction is a 1,2-diacyl-sn-glycero-3-phosphocholine + H2O = a 1-acyl-sn-glycero-3-phosphocholine + a fatty acid + H(+). Its activity is regulated as follows. Inhibited by morin and p-BPB. In terms of biological role, PA2 catalyzes the calcium-dependent hydrolysis of the 2-acyl groups in 3-sn-phosphoglycerides. Induces insulin secretion in isolated rat islets under high glucose concentration conditions, but not under low glucose concentration conditions. Increases perfusion pressure, renal vascular resistance, urinary flow, glomerular filtration rate, and potassium, sodium, and chloride excretion levels in rat kidney. Does not increase perfusion pressure in the rat mesenteric vascular bed. This chain is Phospholipase A2, found in Bunodosoma caissarum (Sea anemone).